The chain runs to 136 residues: Large ribosomal subunit protein uL16 (136 aa).

This sequence belongs to the universal ribosomal protein uL16 family. Part of the 50S ribosomal subunit.

In terms of biological role, binds 23S rRNA and is also seen to make contacts with the A and possibly P site tRNAs. This chain is Large ribosomal subunit protein uL16, found in Enterobacter sp. (strain 638).